Reading from the N-terminus, the 497-residue chain is MHLLPLTVSATAVVSAASSPHAKRAAIDECLKNAKVPVTARNSTEWKTDASPFNDRLPYTPAAIAKPATVEHIQAAVLCAAEVGVKANPKSGGHSYASFGLGGEDGHLVVELDRMYNVTLDPETHIATVQPGARLGHIATVLYEEGKRAFSHGTCPGVGVGGHSLHGGFGFSSHSHGLAVDWITSADVVLANGSLVTASETENPDLFWALRGAGSNFGIVASFRFKTFAAPPNVTSYEINLPWTNSSNVVKGWGALQEWLLNGGMPEEMNMRVLGNAFQTQLQGLYHGNASALKTAIQPLLALLDANLSSVQEHDWMEGFRHYAYSGEIDITDPGYDQSETFYSKSLVTSALPPDVLERVAEYWIETANKVRRSWYIIIDMYGGPNSAVTRVPPGAGSYAFRDPERHLFLYELYDRSFGPYPDDGFAFLDGWVHAFTGGLDSSDWGMYINYADPGLDRAEAQEVYYRQNLDRLRRIKQQLDPTELFYYPQAVEPAEV.

Positions 1–16 (MHLLPLTVSATAVVSA) are cleaved as a signal peptide. A disulfide bond links cysteine 30 and cysteine 79. Asparagine 42 and asparagine 117 each carry an N-linked (GlcNAc...) asparagine glycan. In terms of domain architecture, FAD-binding PCMH-type spans 57–230 (LPYTPAAIAK…ASFRFKTFAA (174 aa)). The 6-(S-cysteinyl)-8alpha-(pros-histidyl)-FAD (His-Cys) cross-link spans 94 to 155 (HSYASFGLGG…GKRAFSHGTC (62 aa)). Threonine 154 is a binding site for substrate. N-linked (GlcNAc...) asparagine glycans are attached at residues asparagine 192, asparagine 233, and asparagine 245. Substrate is bound at residue arginine 272. N-linked (GlcNAc...) asparagine glycans are attached at residues asparagine 289 and asparagine 307. Glutamate 412 and tyrosine 451 together coordinate substrate.

The protein belongs to the oxygen-dependent FAD-linked oxidoreductase family. FAD serves as cofactor. The FAD cofactor is bound via a bicovalent 6-S-cysteinyl, 8alpha-N1-histidyl FAD linkage.

It is found in the secreted. It catalyses the reaction D-xylobiose + O2 = D-xylobiono-1,5-lactone + H2O2. The enzyme catalyses D-xylotriose + O2 = D-xylotriono-1,5-lactone + H2O2. It carries out the reaction D-xylotetraose + O2 = D-xylotetraono-1,5-lactone + H2O2. In terms of biological role, catalyzes the selective oxidation of C1 hydroxyl moieties on mono-, oligo- and polysaccharides with concomitant reduction of molecular oxygen to hydrogen peroxide. This results in the formation of the corresponding lactones, which typically undergo spontaneous hydrolysis. Xylooligosaccharide oxidase is able to oxidize a variety of substrates including D-xylose, D-cellobiose, lactose and arabinose. The enzyme acts primarily on xylooligosaccharides, indicating that it prefers pentose-based oligosaccharides over hexose-based oligosaccharides. This Thermothelomyces thermophilus (strain ATCC 42464 / BCRC 31852 / DSM 1799) (Sporotrichum thermophile) protein is Xylooligosaccharide oxidase.